Reading from the N-terminus, the 114-residue chain is Large ribosomal subunit protein bL19 (114 aa).

It belongs to the bacterial ribosomal protein bL19 family.

Functionally, this protein is located at the 30S-50S ribosomal subunit interface and may play a role in the structure and function of the aminoacyl-tRNA binding site. This chain is Large ribosomal subunit protein bL19, found in Acidithiobacillus ferrooxidans (strain ATCC 23270 / DSM 14882 / CIP 104768 / NCIMB 8455) (Ferrobacillus ferrooxidans (strain ATCC 23270)).